The primary structure comprises 5911 residues: MVPEKPTAQSKSGIGEPFRAGDAAGLHIPTSEINSTYLDDTFPSLFSTMHQFRENDAVKAYPSGGIEKFGDIRATVQPVSSGSSDTSSSDDSQQLQHAVEYWKDILADGKFVSYPSPPASTQQRSSLSGLAPHAVEQLQLPLPKHSKVPPATLMRAAWALVAGRMTDSESIVFGTNVLDEPILSAVPFRAHIHGHTVSSFIESVQKQEEEVMASPHQLTLLFSGMEQASTLFQTLLLIPSDEEYSNSPQDSGCRTPEPCGFGLVLEIAHTQDRASLKVTARYRSDTLQAFEVKRLLHRFASVMAQLDTVKPDQSVDEIDFMTEQDFQDIWAWNSKAPAAINGFIHDIVKEKALIQPSSTAVYAWDGEFTYAEIDRHSNRLAVTLITGYGVQPGTPIALCFEKSKWMAVSMLGVLKAGAYFVMLDAASAPEQRLRTMVEQVQARLVISSPLNQALSSRICAAVVTLDSQTLRECKYNDDEIDRLLHQQLLTSSSNALAHVIFTSGSTGTPKAIPTTHQSIRSALHHQVAAIHLNTKSRVYDFSSYSFDAAIFNIWATFYAGGCLCVPSEADRKDDLVGSFQRLGANHVIMTPSAAQLLASAPEKVPQLETIMLVGERLTIQDVLPWWNRVCLINSYGPCECTPLGTSNLNPSSPTDLLDIGVGLGQVTWIVDPDDHNRLVPPGLIGELVLEGPSVSQGYLNDPERTAAAFVKDPAWLVERGRHGKVYKTGDLVQYSNEQGRLKYIGRKDAQVKIRGQRVELGEVEHRVQQCMPDVSQVVVEMITPKSGNNLSSAMLAAFLVPSRGSGKEVSEPRMAQSIPQIYAVSEEVQSALSKALPSYMVPSVFFSVRDLPKAASSGKLDRKKIREMGSSFSVKQLADLRTNAQGPKRQPRPFSVEYSLQGIWASVLNMERSDIGLNDSFFQLGGDSISAMKVVRDAREQLEVELSVADILQHPRLSEAAAIVARGTKLFKSDEVPAAFSLLPGNNAREAIDPALKSHGVQSLSVEDAFPCTPLQEGLVFLSLKSPGDYIMQTTLDLSTSSYSNAHKFRQAWEHVVAEHPALRTRFVHSDGETGLAQVVLRPEAFAWNEVANSSLNEYLETDRRQPMSLGQAFARCALVHDKGAPRWFVWTMHHALYDGWSIRLIMNAFQRAYRSLEAGSNLVTGTTNASYPAFIKYILSQSVSADGSMAKYWKKTLSDCEAAQFPAVPLHVQNQAPDHDKINTLFQDLPSMTKKQGISNATPSTLIRAAWALVVRSMTNSDDVVFGVTVSGRSAPVAAIDEVPGPTMATVPFRSILAKNMLVGDYLRSVQQQAIDMIPFEQIGLPRIAKLSADCEHACRFQTLLVVQPEETADILSEFDDEHGGPERWFNNTYALLLEVQLGDKKANSSGAVKARFDSRIIQANTVKSLLERLIFVIDQLSGADNMARVLSDIDVVTPVDLEQIWQWNKTVPATIDRNVHDMILERALSQPDRPVVLAWDGELTYGELTRLSSTLARRLIDQYGVRPGDIVGLCFEKSKWTSVAILAVLQAGAGFAMLDPFLPETRLQTIVDQVNALVVVSSPKQRDLSLQLGCDQVLHLASDLFSEPETALVNVKTDPSSPVYIIFTSGSTGTPKGSIISHRSLASSLVHQREGCGFSQSSRVYDFSSYGFDAPLFLAFQTFSAGGCLCVPSDEDRKSRLAESLRELKATFALIPPSASQLVSPEQVPDLKTLIVGGEASTVKDLERWSSADLMLINAYGPCECTAVSMINPTHTSNMSVRKALAIGKGLGQVTWVVDPQDHSRLVSPGAVGELLLEGPYIGQGYLNNEEKTREAYVKDPAWLLQGTGKVPGRRGRLYKTGDLVQYSEDGDGSLMFVGRKADDAQVKIRGQRAELGEIELRVQQALKYDKTVQEVVVDVIVPHGEGSRPMLVAFLKTTDVKDTSATPDLYRVSSAFEDELAQSLPSYMIPEAFFKLAGIPQTATGKLHRMRLRAMGASYSLRQLADLRTEATQGPKPQPTSELEAEMQQIWARVLSFEPERIGLDDSFFRLGGDSIAAMKAVGEATKASIRVTVADFFEHRTLRNICSHSYYCSEMAAESLSIAVESFSLLAPDSIETREKLVQGLAAQLRTTTSRIQDAYPCTPLQEGLVSLASKRTGDYIMQQVLELSPDMLNNIDTFKDAWQKAVHAVPVLRTRIVQHEKLGLLQVLLNHQDEGIEWTEAMGLDWYLKSDRQKPMGLGQPLARYALVRDRTGRPKWFVWTVHHALYDGLSLPMILEEVDRTMQGQSVEQARPQAQAFIKYIQQHDSNELKSYWQATLGDSGECVSYPSLPSGLERPIMSNNLIEHQIPRAWVSSSSNETTVSTMLRAAWGLVTSQMTGSDDVVFGATVSGRNAPVVGVESMAFPTIATVPLRLKLNRKDQRVVDYLDQVQRQATEMIPYEQAGLQRIAQLVSPGARQACAFQTLLVVQPKSKTESTKTSQLGEWTTPDQTEWFTTYPLTIEATVSLSQIDVDARFDSRVVEPWMVKGLLERLDFVMQQLGQAGPDINMSDIGIMTPGGLQQIWKWNEKVPDPVDRSIHSVIEEQARLRPEAAAICAWDGNLTYAELNSFSSRLAFYLIALTGGKSLKETFVPLCFDKSMWTPVAMLGVLKTGAGFVLLDSALPEQRLRHIVEKVGAGQLMLSSDSCSSLSGRISQGVVTINSDFFKLAAQTIARLPVASADSAAYVIFTSGSTGTPKGVVITHRNLASALPYHVKRLGYTPDSRVYEFASYSFGASLNNMFTALTTGSCLCIPSDHERRSQLDRSLVSMNATHVLLTPSVAESLAPRSVSGLKSIIFGGEAVRSQDVGPWWEAGIKVCTAYGSSECTTISTINDTASTPDEATRIGWGVGLVPWVVDPSDHEKLLPPGCIGELLLEGPAVGRGYLSDPEKTAEVFIQSPSWLTRGIPAANNDNHSQKGRSGRLYKTGDLVRYNEDGSLSFFGRKDSQVKIRGQRVELGEVEHRVKERVSEAAQVVVEAIIPTGSDSAHQTLAAFLVMKEETERPASDDDKPTIIPISAGVEDMLSQNLPVYMVPTVFFSMKKLPMTATGKMNRRVLRQIGSSFSAKQFAAARKTREQGTPSQEQPSTNAQRELQQIWSRILDLPTDLIGLDDGFFSLGGDSVSAMKVVGEARKAGIELAVADIFTHRTLRLIADNSKSIKREGDQTVANIIPPFSLIGNEVDIEALRQNISTQCDIDTSKVQDAYPCTPLQEGLISLASKRPGDYVMQAVLELSSEVSITKFQAAWEETTKTIDVLRTRIVHCQGYEKLGLLQVILDSSVNWINATGLESYLQADRKQVMGLNDPLARYALVYDGQTDRPRWFVWTVHHAIYDGWSLPLVLDTVAKAYQGETNAGSQSLTGASGFQPFIKYLEEQQRNPEGVKKTEDYWKRYFDSCEATQFPTLPSPSYEPTSNKTTLYRMKVNSPSSSTSLNLTPSTIIRAAWALVVGQMTNTSDVVFGTTVSGRNAPVQTIEMMPAPTLATVPLRVKWTSGQAILGYLETVQREATEMIAFEQTGLHRIAKMSSDARQACQFQTLLVIQSQGHDEDESTGSLVQNELGSSPFGEWVNQDQNEWFNPYALMIEAQPGSQGDSFTLTANYDEKTIQEWIVLKLLKRLELVIQAFMAESYGQGQMVSKTIDELGGSIMTEDDLEQIWTWNQSTPEAVDKYVHEMVEERVREQPNAPAVHAWDGRLTYKELDQLAEKMAAQLLSSIDTGARLSSPRVIPLCFTKSMWTSVAMYGVLKAGGAFVLLDPMVPEQRLKTIVEQVGADVVLSSESEADLAKRLCPHVIQVGLSLSTGPSPTTQRLKGSQRHLSPHAPMFAVFTSGSTGVPKGVLLSHRNFASEIKHHSHLLGFHKNSRVFDFASHAFDAAVHNVFATFANGACLCVPSEKDRKNNIGGVMASMRVTVADLTPTVARLLDPTTLPDIETMILAGEAVSAEDAARWWRDSTRVVNGYGPSECTVMSTINAYPTSPEDASSIGLGAGHTTWVVDPNNHNILVAPGCIGELLLEGPLVGQGYLNDPAKTAASFIEDPTWLLKGSSTRPGRRGRLYKSGDLVKYREDGRFWFMGRKDSQVKIRGQRIELEEVERQVQASWSGDDISQIAAEVIKPQGQGSKPMLAAFIVSKDHQLSDDGPPEKAVKPVPVDPEIEARLAERLPAAMVPSVFFFYMRSHLPQTATGKTHRKLLREIGSSFSFQHLAEVANQVQDDENETKARRPPTTPLECQMQAIWVRILGISPDRISLDDSFIRLGGDSIAAMKVVGEARKHGSLDITVADLLRRPKLCDIIATMTKNKATGASRRLPRDDDEPIPHTKYAGPVDQSYAQGRLWFLDRLYPGLTWCLMPFTARFRGILRLDALHIALQAVENRHEALRTTFMSRDNVDLQEIHPFIPRELKLVELPRGAKGEESLQRALFKERTTPLDLSTETGWRVTVYRLGPEEENHHVLSILMHHIISDGWSLNVLRRELDIFYAAAVNSLDPLSQIDPLPIQYRDYASWQKQRFHQDEYQRQLDYWVSQLQTSRPAEFLCDKPRPDTLSGGAGVHEFTIANTMYDRLQKFCAEAEVTPFVVLLAAFRATHFRLTGVDDATIGTANANRDRWEVKELIGFFVNLQCLRIKMEQGVSFEDLVQQVQETAAASFDNQHVPFEKIVSQLNTPRDLSRHPLVQVIFALHSRGTSGPVKLGDDLESEMLDPIPTSQFDLEFHVFDDGDCLTANVVYSQDLFETETINSMVSVFNNLLDRALSEPKTAISSLPLLTEDGRLKLETWGLTKIDRTNYPRDSSIVDLFKEQVSRHPNRVAVKGNSSSQLTYAELDRKSDTLARWLLKQQPEFAPESMIGVMAHRSCEEIIALFGILKANMAHLPLNHNTPTGRVETILSAIQGPKRLLLLGQDVAPPAVNLDNIEMVRIADTLEEEAPRSWWKRAVVQALPRPKPTSLAYVLFTSGSTGKPKGVMVEHRGVSRLCRDNNIIRHLPSSGGFGHFLNISFDGSSLEVYFAILNGLTLVCVDEITILDAIALQGVFERENVRAVLFTPALLKQILRVNPTTLGTLDLLCVGGDRLDPADCVKAYKHTAQGAKVLNLYGPTENSVVSTVFCYEGQDEGFATGTAPIGEPISNSGALVMDSQQRLVPLGVIGEIVVTGDGVARGYTDPSRDVDRFIRLDGGKGERAYRTGDYARWRPVDGKIEFMGRMDVQVKIRGHRVELGEIEHAIRGHEAVHDVVVLAYRDEKDGGEPRLVGFVTLHDTSKEDVEVKEVEHKDGEGETKQHVHQELEARLRANLPTYMIPQTITILERMPLNASGKVDRVALSLTITPKTKARAAGVALRKPTTDMEVALRKIWAQVLDLDPETIGLDDNFFDIGGHSILAMRAVSEARKVDIELTVADIFRSKCLEALARRQEEIVGGPNTEEEEEVELIDSNTKAALLKDLDSLKATIHSTQVEDMLPLTSMQEHYVTTGVASGEYAHYFYLDLGANPDVSRIEKACRLTLAKIPILRASFMRLLGQHWQVIPRDVPARLQTVNTIHVNGDLDRAADDFCLRNWDNISAAEPPALFTLLKHRTQGTRLVIRLSHAQYDGVCFPPIVRAIIEGYTTGDVTPLPSFTKFLSGAARQRPQSLEYWSRLLRGSSLTTILPRLRLSNSSRALTPPRPIAAELDVALPQRLPSSITPAIVASAAWSILLSQISGKQDVVFGHVVAGRNSSISRIDEIVGPCLNLVPVRATLTESLTATELLQSLQTQFFTMGSADSVGFKDIMHESSNWPSNSDFESVLHHANVDEHPEFDFDGIKMKLHFFTNPRLIVSRLALASYPTKGGECLQFRLTASTDKLSDVQAKMLLDALCKIIRGFGESANVPVLSWIGQVGLRLSFTLMDYSSFPL.

Residues 1–22 (MVPEKPTAQSKSGIGEPFRAGD) form a disordered region. The adenylation 1 stretch occupies residues 352 to 754 (ALIQPSSTAV…GRKDAQVKIR (403 aa)). A Carrier 1 domain is found at 891-968 (PRPFSVEYSL…EAAAIVARGT (78 aa)). Ser-928 carries the O-(pantetheine 4'-phosphoryl)serine modification. The segment at 1007-1422 (EDAFPCTPLQ…ERLIFVIDQL (416 aa)) is condensation 1. Positions 1467–1865 (ERALSQPDRP…SLMFVGRKAD (399 aa)) are adenylation 2. One can recognise a Carrier 2 domain in the interval 2001-2077 (QPTSELEAEM…NICSHSYYCS (77 aa)). Ser-2038 bears the O-(pantetheine 4'-phosphoryl)serine mark. A condensation 2 region spans residues 2121-2538 (QDAYPCTPLQ…GPDINMSDIG (418 aa)). An adenylation 3 region spans residues 2568–2977 (EEQARLRPEA…GRKDSQVKIR (410 aa)). The Carrier 3 domain maps to 3110-3186 (QPSTNAQREL…LIADNSKSIK (77 aa)). Ser-3147 is subject to O-(pantetheine 4'-phosphoryl)serine. A condensation 3 region spans residues 3227-3652 (VQDAYPCTPL…LELVIQAFMA (426 aa)). Residues 3701 to 4108 (EERVREQPNA…GRKDSQVKIR (408 aa)) form an adenylation 4 region. The Carrier 4 domain maps to 4248-4325 (PPTTPLECQM…DIIATMTKNK (78 aa)). Ser-4285 is modified (O-(pantetheine 4'-phosphoryl)serine). The disordered stretch occupies residues 4326–4347 (ATGASRRLPRDDDEPIPHTKYA). The tract at residues 4353–4793 (SYAQGRLWFL…SLPLLTEDGR (441 aa)) is condensation 4. An adenylation 5 region spans residues 4819 to 5231 (FKEQVSRHPN…GRMDVQVKIR (413 aa)). In terms of domain architecture, Carrier 5 spans 5360–5436 (KPTTDMEVAL…ALARRQEEIV (77 aa)). Ser-5397 bears the O-(pantetheine 4'-phosphoryl)serine mark. The tract at residues 5474–5828 (VEDMLPLTSM…GIKMKLHFFT (355 aa)) is condensation 5.

The protein belongs to the NRP synthetase family.

Its pathway is secondary metabolite biosynthesis. Functionally, nonribosomal peptide synthetase; part of the gene cluster that mediates the biosynthesis of sansalvamide, a cyclic pentadepsipeptide that shows promising results as potential anti-cancer drug. The nonribosmal peptide synthetase NRPS30 produces sansalvamide by incorporating successively one phenylalanine, one leucine, one alpha-hydroxyisocaproic acid (HICA), one valine and one leucine before sansalvamide is released from by cyclization by the terminal C domain of NRPS30. The HICA residue is probably provided by reduction of alpha-ketoisocaproate by the cluster-specific aldo-keto reductase (NECHADRAFT_45914). The protein is Nonribosomal peptide synthetase 30 of Fusarium vanettenii (strain ATCC MYA-4622 / CBS 123669 / FGSC 9596 / NRRL 45880 / 77-13-4) (Fusarium solani subsp. pisi).